A 484-amino-acid polypeptide reads, in one-letter code: Folate synthesis bifunctional protein (484 aa).

The tract at residues 15 to 141 (VIALGSNVGN…PFVLAPLVDL (127 aa)) is HPPK. Positions 202–470 (TYVMGILNLT…NVRDNVDAAR (269 aa)) constitute a Pterin-binding domain. The interval 204 to 484 (VMGILNLTPD…MMTKRFKNVD (281 aa)) is DHPS. N209 serves as a coordination point for Mg(2+). (7,8-dihydropterin-6-yl)methyl diphosphate is bound by residues T249, D286, N305, D378, K423, and 458–460 (RVH).

In the N-terminal section; belongs to the HPPK family. The protein in the C-terminal section; belongs to the DHPS family. The cofactor is Mg(2+). As to expression, expressed exclusively in reproductive tissues.

Its subcellular location is the cytoplasm. It localises to the cytosol. It catalyses the reaction 6-hydroxymethyl-7,8-dihydropterin + ATP = (7,8-dihydropterin-6-yl)methyl diphosphate + AMP + H(+). It carries out the reaction (7,8-dihydropterin-6-yl)methyl diphosphate + 4-aminobenzoate = 7,8-dihydropteroate + diphosphate. Its pathway is cofactor biosynthesis; tetrahydrofolate biosynthesis; 2-amino-4-hydroxy-6-hydroxymethyl-7,8-dihydropteridine diphosphate from 7,8-dihydroneopterin triphosphate: step 4/4. It participates in cofactor biosynthesis; tetrahydrofolate biosynthesis; 7,8-dihydrofolate from 2-amino-4-hydroxy-6-hydroxymethyl-7,8-dihydropteridine diphosphate and 4-aminobenzoate: step 1/2. Its activity is regulated as follows. Inhibited by sulfanilamide. Functionally, catalyzes the first two consecutive steps of tetrahydrofolate biosynthesis. Plays a role in seed stress response and survival. In Arabidopsis thaliana (Mouse-ear cress), this protein is Folate synthesis bifunctional protein.